Here is a 317-residue protein sequence, read N- to C-terminus: 2,3-dihydroxyphenylpropionate/2,3-dihydroxicinnamic acid 1,2-dioxygenase (317 aa).

H115 acts as the Proton donor in catalysis. Catalysis depends on H179, which acts as the Proton acceptor.

It belongs to the LigB/MhpB extradiol dioxygenase family. Homotetramer. Fe(2+) is required as a cofactor.

The enzyme catalyses 3-(2,3-dihydroxyphenyl)propanoate + O2 = (2Z,4E)-2-hydroxy-6-oxonona-2,4-dienedioate + H(+). It catalyses the reaction (2E)-3-(2,3-dihydroxyphenyl)prop-2-enoate + O2 = (2Z,4E,7E)-2-hydroxy-6-oxonona-2,4,7-trienedioate + H(+). The protein operates within aromatic compound metabolism; 3-phenylpropanoate degradation. Catalyzes the non-heme iron(II)-dependent oxidative cleavage of 2,3-dihydroxyphenylpropionic acid and 2,3-dihydroxicinnamic acid into 2-hydroxy-6-ketononadienedioate and 2-hydroxy-6-ketononatrienedioate, respectively. This Burkholderia vietnamiensis (strain G4 / LMG 22486) (Burkholderia cepacia (strain R1808)) protein is 2,3-dihydroxyphenylpropionate/2,3-dihydroxicinnamic acid 1,2-dioxygenase.